The chain runs to 615 residues: Dihydroxy-acid dehydratase (615 aa).

Position 81 (D81) interacts with Mg(2+). C122 lines the [2Fe-2S] cluster pocket. Positions 123 and 124 each coordinate Mg(2+). K124 is subject to N6-carboxylysine. C193 serves as a coordination point for [2Fe-2S] cluster. E489 lines the Mg(2+) pocket. The active-site Proton acceptor is S515.

The protein belongs to the IlvD/Edd family. Homodimer. [2Fe-2S] cluster serves as cofactor. It depends on Mg(2+) as a cofactor.

The enzyme catalyses (2R)-2,3-dihydroxy-3-methylbutanoate = 3-methyl-2-oxobutanoate + H2O. The catalysed reaction is (2R,3R)-2,3-dihydroxy-3-methylpentanoate = (S)-3-methyl-2-oxopentanoate + H2O. It participates in amino-acid biosynthesis; L-isoleucine biosynthesis; L-isoleucine from 2-oxobutanoate: step 3/4. It functions in the pathway amino-acid biosynthesis; L-valine biosynthesis; L-valine from pyruvate: step 3/4. Functionally, functions in the biosynthesis of branched-chain amino acids. Catalyzes the dehydration of (2R,3R)-2,3-dihydroxy-3-methylpentanoate (2,3-dihydroxy-3-methylvalerate) into 2-oxo-3-methylpentanoate (2-oxo-3-methylvalerate) and of (2R)-2,3-dihydroxy-3-methylbutanoate (2,3-dihydroxyisovalerate) into 2-oxo-3-methylbutanoate (2-oxoisovalerate), the penultimate precursor to L-isoleucine and L-valine, respectively. This is Dihydroxy-acid dehydratase from Pseudomonas syringae pv. syringae (strain B728a).